Reading from the N-terminus, the 849-residue chain is Dopamine receptor 2 (849 aa).

Residues 1 to 39 (MEAGETWNVSLEWPPPSLDLSTITQTPSTIVGSGIPLNY) lie on the Extracellular side of the membrane. N-linked (GlcNAc...) asparagine glycosylation occurs at Asn-8. A helical membrane pass occupies residues 40–60 (AGLSLIVIPLITLLGNLLVII). Over 61–70 (SVLRYRALQS) the chain is Cytoplasmic. A helical transmembrane segment spans residues 71 to 91 (AINFLILGLAVADLLVAIIVM). Residues 92–112 (PYAVYVYVTNGDWYLGNLMCD) lie on the Extracellular side of the membrane. An intrachain disulfide couples Cys-111 to Cys-190. A helical membrane pass occupies residues 113–133 (IYMASDVCCSTASILLLAVIS). The Cytoplasmic segment spans residues 134 to 155 (FDRYRAVSLPIQYSRQSQNVKR). A helical membrane pass occupies residues 156-176 (VWTLIAVIWLVSLTLASPMVF). At 177–203 (GVNVRPPDANPYECRFYNAEFSILSSM) the chain is on the extracellular side. Positions 183–849 (PDANPYECRF…HHFSNKQAHV (667 aa)) are required for the interaction with gpa-14. The chain crosses the membrane as a helical span at residues 204 to 224 (ISFVIPCFLVLFVYIRIIIAL). Residues 225–759 (KKREKAAKMR…QRKEKRATKT (535 aa)) lie on the Cytoplasmic side of the membrane. Residues 450–515 (RRSSYADDSQ…NNSRTASITN (66 aa)) are disordered. Positions 457–470 (DSQPTSSQTSSGDG) are enriched in low complexity. Basic residues predominate over residues 477-498 (GQKRFRNLSRNYSTKHHRKVVK). A compositionally biased stretch (polar residues) spans 501 to 515 (RGNSRNNSRTASITN). The chain crosses the membrane as a helical span at residues 760-780 (LGVVVGVFLVCWVPFFVINIL). The Extracellular portion of the chain corresponds to 781 to 798 (NAVCILLNKDSCQVGYDL). A helical membrane pass occupies residues 799 to 819 (FFYCTWIGYMNSFMNPIIYTI). At 820–849 (FNTEFRRAFKSIIFGRNSTRHHFSNKQAHV) the chain is on the cytoplasmic side.

Belongs to the G-protein coupled receptor 1 family. As to quaternary structure, interacts (via C-terminus) with the G-alpha protein gpa-14; the interaction is direct. Expressed in all dopaminergic neurons. Expressed in neurons around the nerve ring and the posterior side of the body including PDE neurons. In hermaphrodites, expressed in the head and tail ganglia including in the RIA interneuron pair, and in a subset of sublateral interneurons and the PDA neuron in the tail. Expressed in cholinergic SIA neurons. Also expressed in the male tail. In males, expressed in the dorsal spicule protractor, ventral spicule protractor, dorsal spicule retractor and ventral spicule retractor muscles and the sensory post-cloacal sensilla B (PCB) neuron. In males, expressed in the sensory hook neurons HOA.

The protein resides in the cell membrane. Functionally, G-protein coupled receptor which binds to the neurotransmitter dopamine with high affinity leading to the activation of an associated G-protein and downstream signaling pathways. Couples to G-proteins to inhibit adenylate cyclase (AC) activity and cAMP production. Inhibits synaptic vesicle fusion to negatively regulate the release of dopamine at dopaminergic neuron synapses. Antagonizes octopamine signaling in response to food by promoting the dopamine-mediated suppression of crh-1/CREB1 transcription factor activation in cholinergic SIA neurons. This is most likely in association with the G(o)-alpha G-protein subunit goa-1. In association with the G-alpha protein gpa-14, modulates two types of learning behavior: touch habituation and chemosensory associative conditioning. May act partly via tsp-17 to negatively regulate dopamine reuptake transporter dat-1 activity. Plays a role in behavioral plasticity and regulates the decision-making process when conflicting alternatives are present. Promotes male mating behavior by antagonizing acetylcholine signaling to control the protrusions of copulatory spicules from the tail of males during hermaphrodite vulval location. Modulates unc-7 activity at gap junctions to promote inhibitory neuronal signaling transduction between chemosensory and mechanosensory neurons, and thus ensures spicule insertion attempts are confined to the hermaphrodite vulva during copulation. G-protein coupled receptor which binds to the neurotransmitter dopamine with high affinity leading to the activation of an associated G-protein and downstream signaling pathways. Couples to G-proteins to inhibit adenylate cyclase (AC) activity and cAMP production. The polypeptide is Dopamine receptor 2 (Caenorhabditis elegans).